We begin with the raw amino-acid sequence, 51 residues long: Cytochrome b559 subunit beta (51 aa).

The chain crosses the membrane as a helical span at residues 26-42 (WLAVHALTVPTIFFLGA). Residue H30 coordinates heme.

This sequence belongs to the PsbE/PsbF family. Heterodimer of an alpha subunit and a beta subunit. PSII is composed of 1 copy each of membrane proteins PsbA, PsbB, PsbC, PsbD, PsbE, PsbF, PsbH, PsbI, PsbJ, PsbK, PsbL, PsbM, PsbT, PsbX, Psb30/Ycf12, peripheral proteins PsbO, CyanoQ (PsbQ), PsbU, PsbV and a large number of cofactors. It forms dimeric complexes. Heme b serves as cofactor.

The protein localises to the cell inner membrane. This b-type cytochrome is tightly associated with the reaction center of photosystem II (PSII). PSII is a light-driven water:plastoquinone oxidoreductase that uses light energy to abstract electrons from H(2)O, generating O(2) and a proton gradient subsequently used for ATP formation. It consists of a core antenna complex that captures photons, and an electron transfer chain that converts photonic excitation into a charge separation. In Gloeobacter violaceus (strain ATCC 29082 / PCC 7421), this protein is Cytochrome b559 subunit beta.